The primary structure comprises 269 residues: Bifunctional protein FolD (269 aa).

NADP(+) contacts are provided by residues 149-151 and valine 215; that span reads GLG.

The protein belongs to the tetrahydrofolate dehydrogenase/cyclohydrolase family. Homodimer.

The enzyme catalyses (6R)-5,10-methylene-5,6,7,8-tetrahydrofolate + NADP(+) = (6R)-5,10-methenyltetrahydrofolate + NADPH. It catalyses the reaction (6R)-5,10-methenyltetrahydrofolate + H2O = (6R)-10-formyltetrahydrofolate + H(+). The protein operates within one-carbon metabolism; tetrahydrofolate interconversion. Catalyzes the oxidation of 5,10-methylenetetrahydrofolate to 5,10-methenyltetrahydrofolate and then the hydrolysis of 5,10-methenyltetrahydrofolate to 10-formyltetrahydrofolate. This is Bifunctional protein FolD from Mycoplasma pneumoniae (strain ATCC 29342 / M129 / Subtype 1) (Mycoplasmoides pneumoniae).